The primary structure comprises 927 residues: Solute carrier family 12 protein B0303.11 (927 aa).

Residues 1–23 (MPSSTASSEDAPITSTAWMNWKD) are Cytoplasmic-facing. Residues 24–44 (VFLKCVQPMLAVVLLLRFSSI) form a helical membrane-spanning segment. Residues 45–53 (VDEAGFTTT) are Extracellular-facing. The chain crosses the membrane as a helical span at residues 54–74 (IILVFFTFLVSLVTGWSACTV). Residues 75–95 (VSRKSSEVGFVKTMLAYSSTE) lie on the Cytoplasmic side of the membrane. Residues 96–116 (FAISFSIIYLFCLLVATSTFL) traverse the membrane as a helical segment. The Extracellular portion of the chain corresponds to 117–141 (TSAAEAVLHIFSTFSLELLDGATHD). A helical membrane pass occupies residues 142 to 159 (LRLVSSVLSLITLALCMV). At 160 to 165 (RNRNAR) the chain is on the cytoplasmic side. Residues 166 to 186 (FVRTFIFALTCIAIALQLSSV) traverse the membrane as a helical segment. The Extracellular portion of the chain corresponds to 187-212 (MFRYGEYQLRRVSDRNAMIPSPPNEE). Residues 213–233 (ISTIFAQLFPAAMCGLTILNI) traverse the membrane as a helical segment. Residues 234 to 244 (GSKLQNTAPRG) are Cytoplasmic-facing. Residues 245–265 (ALIAIAVSACFYGAAAMLDYV) form a helical membrane-spanning segment. The Extracellular segment spans residues 266–284 (EFFARTSTSNSTGSAEYNE). Asn275 carries an N-linked (GlcNAc...) asparagine glycan. The chain crosses the membrane as a helical span at residues 285 to 305 (FLSYIYTTVPMAIVITLACVL). Topologically, residues 306–345 (SAVSTLKYAAVILQSLGRSNQCRCILWLAKGFGERDIPIR) are cytoplasmic. The helical transmembrane segment at 346–366 (CLLLLSTVQILVSAIGSYDIL) threads the bilayer. Position 367 (Cys367) is a topological domain, extracellular. The helical transmembrane segment at 368–388 (IPTTVFYLFAYALFNFYVFLV) threads the bilayer. Topologically, residues 389–394 (KLSDPE) are cytoplasmic. A helical membrane pass occupies residues 395–415 (IPSPPTLLSLAISAACFIASL). The Extracellular segment spans residues 416–419 (YTNR). The helical transmembrane segment at 420–440 (HLALFIASIFAISYCSLLYII) threads the bilayer. At 441–927 (RRERNEDGEE…SMSALRLKFP (487 aa)) the chain is on the cytoplasmic side.

The protein belongs to the SLC12A transporter family.

Its subcellular location is the cell membrane. The protein is Solute carrier family 12 protein B0303.11 of Caenorhabditis elegans.